The primary structure comprises 191 residues: Adenylate kinase (191 aa).

ATP is bound at residue 10 to 15 (GAGKGT). Positions 30-59 (STGDMLRAARTSGTEMGNLVAGVMDRGELV) are NMP. AMP contacts are provided by residues threonine 31, arginine 36, 57–59 (ELV), 83–86 (GFPR), and glutamine 90. Residues 124-140 (NRAKEAAAAGQPVRADD) are LID. Arginine 125 contributes to the ATP binding site. Positions 137 and 148 each coordinate AMP. ATP is bound at residue glycine 176.

This sequence belongs to the adenylate kinase family. Monomer.

It localises to the cytoplasm. The catalysed reaction is AMP + ATP = 2 ADP. Its pathway is purine metabolism; AMP biosynthesis via salvage pathway; AMP from ADP: step 1/1. Its function is as follows. Catalyzes the reversible transfer of the terminal phosphate group between ATP and AMP. Plays an important role in cellular energy homeostasis and in adenine nucleotide metabolism. This chain is Adenylate kinase, found in Jannaschia sp. (strain CCS1).